We begin with the raw amino-acid sequence, 253 residues long: NAD-dependent protein deacylase 2 (253 aa).

Positions 1-252 constitute a Deacetylase sirtuin-type domain; that stretch reads MEDEIRKAAE…VEEVKRLRSE (252 aa). NAD(+)-binding positions include 23–42 and 100–103; these read GAGI…DGLW and QNID. The Proton acceptor role is filled by His118. Cys126, Cys129, Cys150, and Cys153 together coordinate Zn(2+). NAD(+) contacts are provided by residues 191–193, 217–219, and Ala235; these read GSS and NAE.

The protein belongs to the sirtuin family. Class III subfamily. It depends on Zn(2+) as a cofactor.

Its subcellular location is the cytoplasm. The enzyme catalyses N(6)-acetyl-L-lysyl-[protein] + NAD(+) + H2O = 2''-O-acetyl-ADP-D-ribose + nicotinamide + L-lysyl-[protein]. Functionally, NAD-dependent protein deacetylase which modulates the activities of several proteins which are inactive in their acetylated form. Deacetylates the N-terminal lysine residue of Alba, the major archaeal chromatin protein and that, in turn, increases Alba's DNA binding affinity, thereby repressing transcription. This is NAD-dependent protein deacylase 2 from Archaeoglobus fulgidus (strain ATCC 49558 / DSM 4304 / JCM 9628 / NBRC 100126 / VC-16).